Reading from the N-terminus, the 121-residue chain is Cytochrome c2 iso-2 (121 aa).

Positions 15, 18, 19, and 98 each coordinate heme c.

It belongs to the cytochrome c family. In terms of processing, binds 1 heme c group covalently per subunit.

In terms of biological role, cytochrome c2 is found mainly in purple, non-sulfur, photosynthetic bacteria where it functions as the electron donor to the oxidized bacteriochlorophyll in the photophosphorylation pathway. However, it may also have a role in the respiratory chain and is found in some non-photosynthetic bacteria. The polypeptide is Cytochrome c2 iso-2 (Rhodospirillum centenum (Rhodocista centenaria)).